We begin with the raw amino-acid sequence, 397 residues long: Acid extracellular protease (397 aa).

An N-terminal signal peptide occupies residues 1–17 (MQFSLATLTTLLAFVAA). The 318-residue stretch at 61–378 (YQVQISLGGQ…DLERDEVSIA (318 aa)) folds into the Peptidase A1 domain. D77 is a catalytic residue. N-linked (GlcNAc...) asparagine glycosylation is present at N88. Cysteines 93 and 100 form a disulfide. Residue D264 is part of the active site. Residues C303 and C343 are joined by a disulfide bond. 2 N-linked (GlcNAc...) asparagine glycosylation sites follow: N310 and N314.

This sequence belongs to the peptidase A1 family.

Its subcellular location is the secreted. The polypeptide is Acid extracellular protease (AXP1) (Yarrowia lipolytica (strain CLIB 122 / E 150) (Yeast)).